We begin with the raw amino-acid sequence, 218 residues long: Large ribosomal subunit protein uL3 (218 aa).

The segment at 127-167 is disordered; sequence GFSRGPMSHGSKNHREPGSTGAGTTPGRIYPGKRMAGRYGG.

This sequence belongs to the universal ribosomal protein uL3 family. Part of the 50S ribosomal subunit. Forms a cluster with proteins L14 and L19.

One of the primary rRNA binding proteins, it binds directly near the 3'-end of the 23S rRNA, where it nucleates assembly of the 50S subunit. The protein is Large ribosomal subunit protein uL3 of Prochlorococcus marinus (strain MIT 9303).